The primary structure comprises 488 residues: MKKLTALFNLPELKNDIELHNMVLDSRKVKAGDLFVAIKGHQVDGNQFIDSALHSGASAVVSETELSSEHLTVEFIGNVPVVKYHQLARHLSSLADVFYDSPSKNLTLVGVTGTNGKTTISQLLAQWAELLGHRAAVMGTIGNGLFRQIVEAKNTTGSAVEIQSSLSTFKHAGADFTSIEVSSHGLAQHRVEALHFKAAIFTNLTRDHLDYHQSMENYAAAKKRLFTELDTQIKVINADDEIGYQWLTELPDAIAVSMNADFKVGSHQWMKAINIHYHFKGADITFESSWGNGVLHSPLIGAFNVSNLLLVMTTLLSFGYPLENLLATAKSLKGVCGRMEMIQYPNKPTVIVDYAHTPDALEKALIAAREHCQGELWCIFGCGGDRDRGKRPLMAQIAEQFAEKIIVTKDNPRTEPQSQIEADIVAGFKNMEKVGIIPDRAQAIQFAIESAVENDVILIAGKGHEHYQIIGSEVVHFSDQEIALDFLK.

UDP-N-acetyl-alpha-D-muramoyl-L-alanyl-D-glutamate is bound by residues Leu-24, Ser-26, and 41–43 (HQV). Residue 113-119 (GTNGKTT) coordinates ATP. Residues Asn-154, 155 to 156 (TT), Ser-182, Gln-188, and Arg-190 contribute to the UDP-N-acetyl-alpha-D-muramoyl-L-alanyl-D-glutamate site. N6-carboxylysine is present on Lys-222. Meso-2,6-diaminopimelate is bound by residues Arg-386, 410 to 413 (DNPR), Gly-461, and Glu-465. The Meso-diaminopimelate recognition motif signature appears at 410 to 413 (DNPR).

This sequence belongs to the MurCDEF family. MurE subfamily. Mg(2+) serves as cofactor. Carboxylation is probably crucial for Mg(2+) binding and, consequently, for the gamma-phosphate positioning of ATP.

Its subcellular location is the cytoplasm. The catalysed reaction is UDP-N-acetyl-alpha-D-muramoyl-L-alanyl-D-glutamate + meso-2,6-diaminopimelate + ATP = UDP-N-acetyl-alpha-D-muramoyl-L-alanyl-gamma-D-glutamyl-meso-2,6-diaminopimelate + ADP + phosphate + H(+). The protein operates within cell wall biogenesis; peptidoglycan biosynthesis. In terms of biological role, catalyzes the addition of meso-diaminopimelic acid to the nucleotide precursor UDP-N-acetylmuramoyl-L-alanyl-D-glutamate (UMAG) in the biosynthesis of bacterial cell-wall peptidoglycan. In Haemophilus influenzae (strain PittGG), this protein is UDP-N-acetylmuramoyl-L-alanyl-D-glutamate--2,6-diaminopimelate ligase.